The sequence spans 53 residues: Large ribosomal subunit protein bL32 (53 aa).

Residues 1 to 20 are compositionally biased toward basic residues; that stretch reads MAVPKRRVSHTRAAKRRTHY. The segment at 1–53 is disordered; the sequence is MAVPKRRVSHTRAAKRRTHYKLTLPMPVKDADGTWRMPHHMNMTTGEYKTTKA. Positions 42 to 53 are enriched in polar residues; the sequence is NMTTGEYKTTKA.

This sequence belongs to the bacterial ribosomal protein bL32 family.

The protein is Large ribosomal subunit protein bL32 of Sulfurovum sp. (strain NBC37-1).